Reading from the N-terminus, the 599-residue chain is MTTQAPLTGLLPLNPQQLARLQAATTDFTPEQLAWVSGYFWGVLNPRSGADAVARAPERGSLGITLISASQTGNARRVAEALRDDLLAVNLNVNLVNAGDYKFKQIACEKLLVVVTSTQGEGEPPEEAVALHKFLFSKKAPRLNNTAFAVFSLGDTSYEFFCQAGKDFDNKLAELGGERLLDRVDADVEYQTVAAQWRARIVDVLKSRTPVTTPVPSVVSGAVNEIHTSPYTKEAPLRASLSVNQKITGRNSEKDVRHIEIDLGDSGLCYQPGDALGVWYQNDPALVKEIVELLWLKGDEPVAVDGKLLPLTEALQWHFELTVNTAGIVENYATLTRSEFLLPLVGDKAQLQHYAAATPIADMLRFSPSQLDADALVGLLRPLTPRLYSIASSQAEVENEVHLTVGVVRYDIEGRARAGGASSFLADRVDDEGEVRVFIEHNDNFRLPTNPETPIIMIGSGTGIAPFRAFIQQRAADEASGKNWLFFGNPHFTEDFLYQVEWQRYVKEGLLSRIDLAWSRDQKEKIYVQDKLRERGAELWRWINDGAHIYVCGDANRMAKDVEQALLEVIVEFGGMDLESADEYLSELRVARRYQRDVY.

The Flavodoxin-like domain occupies 64–202 (ITLISASQTG…VAAQWRARIV (139 aa)). FMN is bound by residues 70–75 (SQTGNA), 117–120 (STQG), and 153–162 (LGDTSYEFFC). An FAD-binding FR-type domain is found at 234–448 (EAPLRASLSV…IEHNDNFRLP (215 aa)). FAD contacts are provided by residues Thr-322, Ala-356, 386–389 (RLYS), 404–406 (TVG), Tyr-410, and 419–422 (GGAS). NADP(+) contacts are provided by residues 519–520 (SR), 525–529 (KIYVQ), and Asp-561. Tyr-599 lines the FAD pocket.

The protein belongs to the NADPH-dependent sulphite reductase flavoprotein subunit CysJ family. In the N-terminal section; belongs to the flavodoxin family. This sequence in the C-terminal section; belongs to the flavoprotein pyridine nucleotide cytochrome reductase family. In terms of assembly, alpha(8)-beta(8). The alpha component is a flavoprotein, the beta component is a hemoprotein. It depends on FAD as a cofactor. FMN serves as cofactor.

It catalyses the reaction hydrogen sulfide + 3 NADP(+) + 3 H2O = sulfite + 3 NADPH + 4 H(+). Its pathway is sulfur metabolism; hydrogen sulfide biosynthesis; hydrogen sulfide from sulfite (NADPH route): step 1/1. In terms of biological role, component of the sulfite reductase complex that catalyzes the 6-electron reduction of sulfite to sulfide. This is one of several activities required for the biosynthesis of L-cysteine from sulfate. The flavoprotein component catalyzes the electron flow from NADPH -&gt; FAD -&gt; FMN to the hemoprotein component. The protein is Sulfite reductase [NADPH] flavoprotein alpha-component of Salmonella arizonae (strain ATCC BAA-731 / CDC346-86 / RSK2980).